A 282-amino-acid polypeptide reads, in one-letter code: Phenylethanolamine N-methyltransferase (282 aa).

Residue Ser-7 is modified to Phosphoserine. S-adenosyl-L-methionine contacts are provided by residues Tyr-35, Tyr-40, 79-80 (GS), Tyr-85, Asp-101, Asn-106, 158-159 (DV), and Ala-181. The octopamine site is built by Glu-219 and Asp-267.

The enzyme catalyses phenylethanolamine + S-adenosyl-L-methionine = N-methylphenylethanolamine + S-adenosyl-L-homocysteine + H(+). It catalyses the reaction (R)-noradrenaline + S-adenosyl-L-methionine = (R)-adrenaline + S-adenosyl-L-homocysteine + H(+). The catalysed reaction is (R)-normetanephrine + S-adenosyl-L-methionine = (R)-metanephrine + S-adenosyl-L-homocysteine + H(+). It carries out the reaction (R)-octopamine + S-adenosyl-L-methionine = (R)-synephrine + S-adenosyl-L-homocysteine + H(+). It functions in the pathway catecholamine biosynthesis; (R)-adrenaline biosynthesis; (R)-adrenaline from (R)-noradrenaline: step 1/1. Inhibited by methyl methanethiosulfonate, phenylglyoxal, tetranitromethane and diethyl pyrocarbonate. Inhibited by 4-oxo-1,4-dihydro-quinoline-3,7-dicarboxylic acid, 4-(benzo[d][1,3]dioxol-5-ylamino)-4-oxobutanoic acid and 1,4-diaminonaphthalene-2,6-disulfonic acid. Catalyzes the transmethylation of nonepinephrine (noradrenaline) to form epinephrine (adrenaline), using S-adenosyl-L-methionine as the methyl donor. Other substrates include phenylethanolamine and octopamine. Also methylates normetanephrine. This Homo sapiens (Human) protein is Phenylethanolamine N-methyltransferase (PNMT).